The sequence spans 225 residues: Small ribosomal subunit protein eS1 (225 aa).

It belongs to the eukaryotic ribosomal protein eS1 family.

The polypeptide is Small ribosomal subunit protein eS1 (Methanococcus maripaludis (strain DSM 14266 / JCM 13030 / NBRC 101832 / S2 / LL)).